A 140-amino-acid chain; its full sequence is L-fucose mutarotase (140 aa).

His22 acts as the Proton donor in catalysis. Substrate contacts are provided by residues Asp30, Arg107, and 129-131 (YGN).

It belongs to the RbsD / FucU family. FucU mutarotase subfamily. In terms of assembly, homodecamer.

Its subcellular location is the cytoplasm. The catalysed reaction is alpha-L-fucose = beta-L-fucose. Its pathway is carbohydrate metabolism; L-fucose metabolism. Involved in the anomeric conversion of L-fucose. This Citrobacter koseri (strain ATCC BAA-895 / CDC 4225-83 / SGSC4696) protein is L-fucose mutarotase.